The sequence spans 516 residues: 2-isopropylmalate synthase (516 aa).

In terms of domain architecture, Pyruvate carboxyltransferase spans 5 to 267; it reads VIIFDTTLRD…TTGIKHDEIS (263 aa). Mn(2+) contacts are provided by Asp-14, His-202, His-204, and Asn-238. Residues 392–516 are regulatory domain; the sequence is KLNYLSVQSG…IKQKKSVATV (125 aa).

The protein belongs to the alpha-IPM synthase/homocitrate synthase family. LeuA type 1 subfamily. Homodimer. Mn(2+) is required as a cofactor.

It is found in the cytoplasm. The catalysed reaction is 3-methyl-2-oxobutanoate + acetyl-CoA + H2O = (2S)-2-isopropylmalate + CoA + H(+). The protein operates within amino-acid biosynthesis; L-leucine biosynthesis; L-leucine from 3-methyl-2-oxobutanoate: step 1/4. Catalyzes the condensation of the acetyl group of acetyl-CoA with 3-methyl-2-oxobutanoate (2-ketoisovalerate) to form 3-carboxy-3-hydroxy-4-methylpentanoate (2-isopropylmalate). In Vibrio cholerae serotype O1 (strain ATCC 39315 / El Tor Inaba N16961), this protein is 2-isopropylmalate synthase.